Reading from the N-terminus, the 98-residue chain is Large ribosomal subunit protein bL28 (98 aa).

This sequence belongs to the bacterial ribosomal protein bL28 family.

The sequence is that of Large ribosomal subunit protein bL28 from Mesorhizobium japonicum (strain LMG 29417 / CECT 9101 / MAFF 303099) (Mesorhizobium loti (strain MAFF 303099)).